Consider the following 1288-residue polypeptide: Probable serine/threonine-protein kinase drkD (1288 aa).

Over residues 1–12 (MEGSFQFNKSKQ) the composition is skewed to polar residues. Disordered stretches follow at residues 1 to 132 (MEGS…QYHP), 156 to 223 (FNVS…PEEI), and 269 to 386 (SFGH…DDEE). Low complexity-rich tracts occupy residues 13–79 (TNNN…NSTS) and 156–220 (FNVS…QQQP). A coiled-coil region spans residues 221–248 (EEIEGELNRERQERDKMLHEEAEIEQYK). Polar residues predominate over residues 271-291 (GHITSANSDETTNNESGSPIN). Over residues 302–343 (PHSSHNEDHQSDQDNHGQFMNDEHQSTDDDQNKSDNEKESES) the composition is skewed to basic and acidic residues. The span at 344–354 (ARNSGDLQQKV) shows a compositional bias: polar residues. The segment covering 376-386 (EGEEEDDDDEE) has biased composition (acidic residues). LRR repeat units follow at residues 400–421 (KSTK…VWSI), 423–444 (ELRD…IGLL), 446–468 (HLKR…YSLP), 469–490 (RLTT…INRL), 492–513 (SLKT…TNLH), 517–538 (NLVE…MLES), and 540–561 (HLQV…LKKS). 3 disordered regions span residues 690–717 (WDQQ…VLTG), 733–764 (PTQQ…QQQQ), and 796–825 (QQQQ…KDHQ). Composition is skewed to polar residues over residues 701–717 (SPNV…VLTG) and 733–757 (PTQQ…HNNN). A Protein kinase domain is found at 851-1104 (IAIGARIGRG…EILPIMEGMI (254 aa)). Residues 857-865 (IGRGGYGQV) and Lys878 each bind ATP. Asp974 (proton acceptor) is an active-site residue. Disordered stretches follow at residues 1118 to 1141 (GRPI…QNMA) and 1245 to 1288 (QQQL…NDKK). The span at 1257-1268 (NRLNYNFNNSNN) shows a compositional bias: low complexity. Residues 1269-1282 (SDIQPMQQENNYRM) are compositionally biased toward polar residues.

This sequence belongs to the protein kinase superfamily. TKL Ser/Thr protein kinase family.

It catalyses the reaction L-seryl-[protein] + ATP = O-phospho-L-seryl-[protein] + ADP + H(+). The catalysed reaction is L-threonyl-[protein] + ATP = O-phospho-L-threonyl-[protein] + ADP + H(+). The protein is Probable serine/threonine-protein kinase drkD (drkD) of Dictyostelium discoideum (Social amoeba).